Reading from the N-terminus, the 1084-residue chain is Myosin heavy chain, skeletal muscle (1084 aa).

3 disordered regions span residues 1–20 (SAETEKEMANMKEEFEKTKE), 270–292 (EIEAERASRAKAEKQRSDLSREL), and 298–317 (RLEEAGGATSAQIEMNKKRE). The segment at 1–258 (SAETEKEMAN…SKIEDEQALM (258 aa)) is alpha-helical tailpiece (S2). Residues 259-1084 (TNLQRIEELE…DVHSKVISEE (826 aa)) are rodlike tail (S2 and LMM domains). The span at 273-292 (AERASRAKAEKQRSDLSREL) shows a compositional bias: basic and acidic residues. Residues 455-1084 (QAFTQQIEGL…DVHSKVISEE (630 aa)) are a coiled coil.

As to quaternary structure, muscle myosin is a hexameric protein that consists of 2 heavy chain subunits (MHC), 2 alkali light chain subunits (MLC) and 2 regulatory light chain subunits (MLC-2).

The protein resides in the cytoplasm. It is found in the myofibril. In terms of biological role, muscle contraction. The sequence is that of Myosin heavy chain, skeletal muscle from Oryctolagus cuniculus (Rabbit).